A 154-amino-acid chain; its full sequence is Hydroperoxy fatty acid reductase Gpx2 (154 aa).

The active site involves Cys34.

Belongs to the glutathione peroxidase family. Monomer.

It carries out the reaction a hydroperoxy polyunsaturated fatty acid + NADPH + H(+) = a hydroxy polyunsaturated fatty acid + NADP(+) + H2O. Mercaptosuccinate, pCMB, and nethylmaleimide act as inhibitors of the catalytic activity. Hydroperoxy fatty acid reductase essential for the removal of lipid hydroperoxides under normal and stress conditions, leading to the protection of membrane integrity. This chain is Hydroperoxy fatty acid reductase Gpx2 (gpx2), found in Synechocystis sp. (strain ATCC 27184 / PCC 6803 / Kazusa).